The sequence spans 199 residues: Protein-methionine-sulfoxide reductase heme-binding subunit MsrQ (199 aa).

5 consecutive transmembrane segments (helical) span residues 8–28 (ITWLKVILHLAGLLPFIWLFW), 82–102 (LWCFAWATLHLTSYALLELGI), 116–136 (PYLTLGIVSWVILFALTLTST), 149–169 (FLHNFVYLVAILTPIHYLWSV), and 171–191 (ILSPQPVIYALLALGLLAWRY).

The protein belongs to the MsrQ family. In terms of assembly, heterodimer of a catalytic subunit (MsrP) and a heme-binding subunit (MsrQ). FMN is required as a cofactor. Heme b serves as cofactor.

The protein resides in the cell inner membrane. Functionally, part of the MsrPQ system that repairs oxidized periplasmic proteins containing methionine sulfoxide residues (Met-O), using respiratory chain electrons. Thus protects these proteins from oxidative-stress damage caused by reactive species of oxygen and chlorine generated by the host defense mechanisms. MsrPQ is essential for the maintenance of envelope integrity under bleach stress, rescuing a wide series of structurally unrelated periplasmic proteins from methionine oxidation. MsrQ provides electrons for reduction to the reductase catalytic subunit MsrP, using the quinone pool of the respiratory chain. This chain is Protein-methionine-sulfoxide reductase heme-binding subunit MsrQ, found in Enterobacter sp. (strain 638).